The primary structure comprises 211 residues: Probable chemoreceptor glutamine deamidase CheD (211 aa).

Belongs to the CheD family.

The catalysed reaction is L-glutaminyl-[protein] + H2O = L-glutamyl-[protein] + NH4(+). In terms of biological role, probably deamidates glutamine residues to glutamate on methyl-accepting chemotaxis receptors (MCPs), playing an important role in chemotaxis. The polypeptide is Probable chemoreceptor glutamine deamidase CheD (Hahella chejuensis (strain KCTC 2396)).